Reading from the N-terminus, the 91-residue chain is Small ribosomal subunit protein uS15 (91 aa).

This sequence belongs to the universal ribosomal protein uS15 family. In terms of assembly, part of the 30S ribosomal subunit. Forms a bridge to the 50S subunit in the 70S ribosome, contacting the 23S rRNA.

Functionally, one of the primary rRNA binding proteins, it binds directly to 16S rRNA where it helps nucleate assembly of the platform of the 30S subunit by binding and bridging several RNA helices of the 16S rRNA. Forms an intersubunit bridge (bridge B4) with the 23S rRNA of the 50S subunit in the ribosome. This is Small ribosomal subunit protein uS15 from Legionella pneumophila (strain Corby).